A 381-amino-acid polypeptide reads, in one-letter code: L-lactate dehydrogenase A-like 6B (381 aa).

NAD(+) is bound by residues 101–106 (DVDEGR) and R148. R155, N187, and R218 together coordinate substrate. Residue N187 coordinates NAD(+). Residue H242 is the Proton acceptor of the active site. Residue T297 participates in substrate binding.

This sequence belongs to the LDH/MDH superfamily. LDH family.

It carries out the reaction (S)-lactate + NAD(+) = pyruvate + NADH + H(+). The protein operates within fermentation; pyruvate fermentation to lactate; (S)-lactate from pyruvate: step 1/1. The polypeptide is L-lactate dehydrogenase A-like 6B (LDHAL6B) (Bos taurus (Bovine)).